A 545-amino-acid polypeptide reads, in one-letter code: Methionine--tRNA ligase (545 aa).

The short motif at 13 to 23 (PYANGEIHLGH) is the 'HIGH' region element. The Zn(2+) site is built by C144, C147, C157, and C160. The 'KMSKS' region motif lies at 329–333 (KMSKS). K332 is a binding site for ATP.

Belongs to the class-I aminoacyl-tRNA synthetase family. MetG type 1 subfamily. In terms of assembly, monomer. Requires Zn(2+) as cofactor.

It is found in the cytoplasm. It carries out the reaction tRNA(Met) + L-methionine + ATP = L-methionyl-tRNA(Met) + AMP + diphosphate. Its function is as follows. Is required not only for elongation of protein synthesis but also for the initiation of all mRNA translation through initiator tRNA(fMet) aminoacylation. This chain is Methionine--tRNA ligase, found in Vesicomyosocius okutanii subsp. Calyptogena okutanii (strain HA).